The primary structure comprises 427 residues: BSD domain-containing protein 1 (427 aa).

Serine 92 and serine 166 each carry phosphoserine. The region spanning 146–198 (WLSEFCLEEKKGEISELLVGSPSIRALYTKMVPAAVSHSEFWHRYFYKVHQLE) is the BSD domain. Residues 208-397 (KQRADQSISE…ISEDWEKDFD (190 aa)) are disordered. The span at 219 to 229 (PGWEEEEEELE) shows a compositional bias: acidic residues. A compositionally biased stretch (basic and acidic residues) spans 236–245 (KEAKIPKETK). The span at 268–279 (PAEATPSESSES) shows a compositional bias: low complexity. Residues 324–333 (GPPPPPPSKP) are compositionally biased toward pro residues. Basic and acidic residues predominate over residues 347–364 (PPARVETLREEVPTDLRV). Threonine 353 carries the phosphothreonine modification. Over residues 368-387 (NSDSGKSTPSNNGKKGSSTD) the composition is skewed to polar residues. 2 positions are modified to phosphoserine: serine 384 and serine 385. The segment covering 388–397 (ISEDWEKDFD) has biased composition (acidic residues). A Phosphoserine modification is found at serine 415.

The sequence is that of BSD domain-containing protein 1 (Bsdc1) from Mus musculus (Mouse).